The chain runs to 221 residues: Glutathione peroxidase 6 (221 aa).

A signal peptide spans 1–19 (MAQKLWGSCLFSLFMAALA). C73 is an active-site residue.

Belongs to the glutathione peroxidase family.

The protein localises to the secreted. The catalysed reaction is 2 glutathione + H2O2 = glutathione disulfide + 2 H2O. The polypeptide is Glutathione peroxidase 6 (Gpx6) (Mus musculus (Mouse)).